The following is a 518-amino-acid chain: AarF domain-containing kinase 1 (518 aa).

The 320-residue stretch at 149-468 (SFEREPLGTA…SKCCVQSSYA (320 aa)) folds into the Protein kinase domain. Residues 155–163 (LGTASLAQV) and Lys-177 each bind ATP. Asp-309 acts as the Proton acceptor in catalysis.

The protein belongs to the protein kinase superfamily. ADCK protein kinase family.

The protein localises to the mitochondrion. Functionally, essential for maintaining mitochondrial cristae formation and mitochondrial function by acting via YME1L to regulate the mitochondrial structural proteins Opa1 and Mitofilin. This function is likely to be kinase-independent. Functions in tracheal development and larval molting probably by acting in sterol modification and/or intracellular lipid trafficking. The action of this enzyme is not yet clear. It is not known if it has protein kinase activity and what type of substrate it would phosphorylate (Ser, Thr or Tyr). The protein is AarF domain-containing kinase 1 of Drosophila melanogaster (Fruit fly).